Reading from the N-terminus, the 104-residue chain is L-rhamnose mutarotase (104 aa).

Tyr18 is a substrate binding site. The active-site Proton donor is His22. Substrate-binding positions include Tyr41 and 76-77 (WW).

This sequence belongs to the rhamnose mutarotase family. In terms of assembly, homodimer.

It is found in the cytoplasm. The enzyme catalyses alpha-L-rhamnose = beta-L-rhamnose. The protein operates within carbohydrate metabolism; L-rhamnose metabolism. Functionally, involved in the anomeric conversion of L-rhamnose. The sequence is that of L-rhamnose mutarotase from Burkholderia ambifaria (strain ATCC BAA-244 / DSM 16087 / CCUG 44356 / LMG 19182 / AMMD) (Burkholderia cepacia (strain AMMD)).